Here is a 280-residue protein sequence, read N- to C-terminus: Chlorophyll a-b binding protein CP29 (280 aa).

Residues M1–V42 form a disordered region. An N-acetylvaline modification is found at V2. Residue T7 is modified to Phosphothreonine; in State 1 and State 2. Residues G10–T37 show a composition bias toward low complexity. T17 carries the phosphothreonine; in State 2 modification. T33 is subject to Phosphothreonine; in State 1 and State 2. Y47 lines the chlorophyll b pocket. Positions 73 and 79 each coordinate chlorophyll a. S103 carries the post-translational modification Phosphoserine; in State 2. Residues E137 and H140 each coordinate chlorophyll a. The next 2 membrane-spanning stretches (helical) occupy residues W143 to V163 and A176 to G196. Positions 183, 199, and 202 each coordinate chlorophyll b. E238, H241, R243, and Q255 together coordinate chlorophyll a. Residues L244–L264 form a helical membrane-spanning segment.

The protein belongs to the light-harvesting chlorophyll a/b-binding (LHC) protein family. The LHC complex consists of chlorophyll a-b binding proteins. Binds at least 14 chlorophylls (8 Chl-a and 6 Chl-b) and carotenoids such as lutein and neoxanthin. is required as a cofactor. In terms of processing, reversible phosphorylation plays a role in the State transition process and determines the affinity of LHCII for PSI and PSII.

Its subcellular location is the plastid. It is found in the chloroplast thylakoid membrane. The light-harvesting complex (LHC) functions as a light receptor, it captures and delivers excitation energy to photosystems with which it is closely associated. CP29 facilitates the State 1 to State 2 transition, where State I is induced by excess photosystem I (PSI) light and State 2 is induced by excess photosystem II (PSII) light. This is Chlorophyll a-b binding protein CP29 from Chlamydomonas reinhardtii (Chlamydomonas smithii).